The primary structure comprises 296 residues: Bifunctional protein FolD (296 aa).

NADP(+)-binding positions include 170 to 172 and S195; that span reads GRS.

This sequence belongs to the tetrahydrofolate dehydrogenase/cyclohydrolase family. As to quaternary structure, homodimer.

The catalysed reaction is (6R)-5,10-methylene-5,6,7,8-tetrahydrofolate + NADP(+) = (6R)-5,10-methenyltetrahydrofolate + NADPH. It carries out the reaction (6R)-5,10-methenyltetrahydrofolate + H2O = (6R)-10-formyltetrahydrofolate + H(+). The protein operates within one-carbon metabolism; tetrahydrofolate interconversion. Functionally, catalyzes the oxidation of 5,10-methylenetetrahydrofolate to 5,10-methenyltetrahydrofolate and then the hydrolysis of 5,10-methenyltetrahydrofolate to 10-formyltetrahydrofolate. The protein is Bifunctional protein FolD of Rhodospirillum rubrum (strain ATCC 11170 / ATH 1.1.1 / DSM 467 / LMG 4362 / NCIMB 8255 / S1).